Consider the following 229-residue polypeptide: Enolase-phosphatase E1 (229 aa).

This sequence belongs to the HAD-like hydrolase superfamily. MasA/MtnC family. As to quaternary structure, monomer. Requires Mg(2+) as cofactor.

It carries out the reaction 5-methylsulfanyl-2,3-dioxopentyl phosphate + H2O = 1,2-dihydroxy-5-(methylsulfanyl)pent-1-en-3-one + phosphate. It participates in amino-acid biosynthesis; L-methionine biosynthesis via salvage pathway; L-methionine from S-methyl-5-thio-alpha-D-ribose 1-phosphate: step 3/6. It functions in the pathway amino-acid biosynthesis; L-methionine biosynthesis via salvage pathway; L-methionine from S-methyl-5-thio-alpha-D-ribose 1-phosphate: step 4/6. In terms of biological role, bifunctional enzyme that catalyzes the enolization of 2,3-diketo-5-methylthiopentyl-1-phosphate (DK-MTP-1-P) into the intermediate 2-hydroxy-3-keto-5-methylthiopentenyl-1-phosphate (HK-MTPenyl-1-P), which is then dephosphorylated to form the acireductone 1,2-dihydroxy-3-keto-5-methylthiopentene (DHK-MTPene). This chain is Enolase-phosphatase E1, found in Pectobacterium atrosepticum (strain SCRI 1043 / ATCC BAA-672) (Erwinia carotovora subsp. atroseptica).